We begin with the raw amino-acid sequence, 363 residues long: Peptide chain release factor 1 (363 aa).

Gln-237 carries the N5-methylglutamine modification. The segment at 281–302 (QQAEDEKSHAEEQTIRRSLVAS) is disordered. A compositionally biased stretch (basic and acidic residues) spans 282–295 (QAEDEKSHAEEQTI).

This sequence belongs to the prokaryotic/mitochondrial release factor family. In terms of processing, methylated by PrmC. Methylation increases the termination efficiency of RF1.

Its subcellular location is the cytoplasm. Functionally, peptide chain release factor 1 directs the termination of translation in response to the peptide chain termination codons UAG and UAA. The chain is Peptide chain release factor 1 from Psychromonas ingrahamii (strain DSM 17664 / CCUG 51855 / 37).